We begin with the raw amino-acid sequence, 448 residues long: Glutamyl-tRNA reductase (448 aa).

Substrate contacts are provided by residues 49-52 (TCNR), Ser109, 114-116 (ETQ), and Gln120. The active-site Nucleophile is the Cys50. 189–194 (GAGEMS) provides a ligand contact to NADP(+).

Belongs to the glutamyl-tRNA reductase family. In terms of assembly, homodimer.

It carries out the reaction (S)-4-amino-5-oxopentanoate + tRNA(Glu) + NADP(+) = L-glutamyl-tRNA(Glu) + NADPH + H(+). The protein operates within porphyrin-containing compound metabolism; protoporphyrin-IX biosynthesis; 5-aminolevulinate from L-glutamyl-tRNA(Glu): step 1/2. Catalyzes the NADPH-dependent reduction of glutamyl-tRNA(Glu) to glutamate 1-semialdehyde (GSA). The sequence is that of Glutamyl-tRNA reductase from Staphylococcus haemolyticus (strain JCSC1435).